The chain runs to 437 residues: GTPase Obg (437 aa).

Residues Ser2–Leu160 enclose the Obg domain. Residues Ala161–Ala338 form the OBG-type G domain. GTP contacts are provided by residues Gly167 to Ser174, Phe192 to Val196, Asp214 to Gly217, Asn284 to Asp287, and Ser319 to Leu321. Ser174 and Thr194 together coordinate Mg(2+). An OCT domain is found at Gly359 to Asp437.

This sequence belongs to the TRAFAC class OBG-HflX-like GTPase superfamily. OBG GTPase family. Monomer. Mg(2+) is required as a cofactor.

It is found in the cytoplasm. Its function is as follows. An essential GTPase which binds GTP, GDP and possibly (p)ppGpp with moderate affinity, with high nucleotide exchange rates and a fairly low GTP hydrolysis rate. Plays a role in control of the cell cycle, stress response, ribosome biogenesis and in those bacteria that undergo differentiation, in morphogenesis control. The chain is GTPase Obg from Streptococcus agalactiae serotype Ia (strain ATCC 27591 / A909 / CDC SS700).